The following is a 465-amino-acid chain: UDP-N-acetylmuramoylalanine--D-glutamate ligase (465 aa).

ATP is bound at residue 112 to 118; sequence GTDGKTT.

It belongs to the MurCDEF family.

It is found in the cytoplasm. The enzyme catalyses UDP-N-acetyl-alpha-D-muramoyl-L-alanine + D-glutamate + ATP = UDP-N-acetyl-alpha-D-muramoyl-L-alanyl-D-glutamate + ADP + phosphate + H(+). It functions in the pathway cell wall biogenesis; peptidoglycan biosynthesis. Cell wall formation. Catalyzes the addition of glutamate to the nucleotide precursor UDP-N-acetylmuramoyl-L-alanine (UMA). This Chlorobium limicola (strain DSM 245 / NBRC 103803 / 6330) protein is UDP-N-acetylmuramoylalanine--D-glutamate ligase.